A 75-amino-acid polypeptide reads, in one-letter code: uncharacterized protein (75 aa).

Positions 1–25 (MSLFYRAVALGTLSALVWYSTSILA) are cleaved as a signal peptide. A helical transmembrane segment spans residues 55 to 75 (YRALLAFSLVICGTLLVTCVI).

The protein resides in the host endoplasmic reticulum membrane. Its function is as follows. Plays a role in the down-regulation of the host NKG2D ligand MICA by targeting ER-resident MICA to proteasomal degradation prior to the GPI-anchoring step. In turn, MICA reduction diminishes NK-cell killing of HCMV-infected cells. This is an uncharacterized protein from Homo sapiens (Human).